A 312-amino-acid polypeptide reads, in one-letter code: Calcium-independent mitochondrial carrier protein SCaMC-3L (312 aa).

3 Solcar repeats span residues 27-113 (GTLW…SRNF), 121-206 (PSFQ…LRCL), and 217-304 (PSGL…MKKT). The next 6 membrane-spanning stretches (helical) occupy residues 33–50 (LLSGAMAGAVSRTGTAPL), 88–107 (GNGINVLKIAPEYAIKFSVF), 131–144 (SLAVAISQTLINPM), 182–200 (YLPNMLGIIPYACTDLAVY), 219–243 (GLVSLSSVTLSTTCGQMASYPLTLV), and 279–298 (GMTPTLLKVLPAGGISYLVY).

It belongs to the mitochondrial carrier (TC 2.A.29) family. Mainly expressed in testis and at lesser levels in brain.

The protein resides in the mitochondrion inner membrane. It catalyses the reaction Mg(2+)(out) + phosphate(in) + ATP(out) = Mg(2+)(in) + phosphate(out) + ATP(in). It carries out the reaction ADP(out) + phosphate(in) + H(+)(out) = ADP(in) + phosphate(out) + H(+)(in). Its function is as follows. Calcium-independent ATP-Mg/Pi exchanger that catalyzes the electroneutral exchange of Mg-ATP or free ADP against an hydrogenphosphate and participates in the net transport of adenine nucleotides across the mitochondria inner membrane. This chain is Calcium-independent mitochondrial carrier protein SCaMC-3L, found in Rattus norvegicus (Rat).